The primary structure comprises 497 residues: Cytochrome P450 monooxygenase cicH (497 aa).

A helical membrane pass occupies residues 2-19; the sequence is AILVRLFFALFVVSVYFF. Cysteine 439 serves as a coordination point for heme. Asparagine 443 carries N-linked (GlcNAc...) asparagine glycosylation.

The protein belongs to the cytochrome P450 family. Requires heme as cofactor.

It localises to the membrane. Its pathway is phytotoxin biosynthesis. In terms of biological role, cytochrome P450 monooxygenase; part of the gene cluster that mediates the biosynthesis of cichorine, a phytotoxin active against knapweed, corn, and soybeans. The first step in the pathway is performed by the non-reducing polyketide synthase pkbA that condenses one acetyl-CoA starter unit with 3 malonyl-CoA units. PkbA also catalyzes one methylation step to produce 3-methylorsellinate. The nonribosomal peptide synthase-like protein cicB, the cytochrome P450 monooxygenase cicH and the O-methyltransferase cicE are involved in the conversion of 3-methylorsellinate into nidulol. CicB converts 3-methylorsellinate to a yet unidentified intermediate, cicH may play a ring-closing role for cichorine and cicE is plausibly responsible for the methylation of one of the phenol groups. The oxidoreductase cicC acts downstream with still unidentified enzymes to further convert nidulol into cichorine. This chain is Cytochrome P450 monooxygenase cicH, found in Emericella nidulans (strain FGSC A4 / ATCC 38163 / CBS 112.46 / NRRL 194 / M139) (Aspergillus nidulans).